A 377-amino-acid chain; its full sequence is DNA replication and repair protein RecF (377 aa).

ATP is bound at residue 30 to 37; it reads GQNAQGKS.

The protein belongs to the RecF family.

It is found in the cytoplasm. The RecF protein is involved in DNA metabolism; it is required for DNA replication and normal SOS inducibility. RecF binds preferentially to single-stranded, linear DNA. It also seems to bind ATP. The sequence is that of DNA replication and repair protein RecF from Cyanothece sp. (strain PCC 7425 / ATCC 29141).